The chain runs to 147 residues: MVEWTDSERAIINDIFATLDYEEIGRKSLTRCLIVYPWTQRYFGAFGNLYNAATIMANPLIAAHGTKILHGLDRALKNMDDIKNTYAELSLLHSDKLHVDPDNFRLLADCLTVVIAAKMGAAFTVDTQVAWQKFLSVVVSALGRQYH.

Residues 3 to 147 (EWTDSERAII…VVSALGRQYH (145 aa)) enclose the Globin domain. Heme b is bound by residues His64 and His93.

Belongs to the globin family. Hb 3 is a heterotetramer of two alpha-2 and two beta-2 chains. Red blood cells.

Its function is as follows. Involved in oxygen transport from gills to the various peripheral tissues. In Arctogadus glacialis (Arctic cod), this protein is Hemoglobin subunit beta-2 (hbb2).